A 466-amino-acid chain; its full sequence is Vimentin (466 aa).

Residues 1 to 13 show a composition bias toward low complexity; that stretch reads MSTRSVSSSSYRR. The disordered stretch occupies residues 1 to 32; it reads MSTRSVSSSSYRRMFGGPGTGSRPSSTRSYVT. Residue S2 is modified to N-acetylserine. Positions 2 to 95 are head; that stretch reads STRSVSSSSY…FSLADAINTE (94 aa). 5 positions are modified to phosphoserine: S5, S7, S8, S9, and S10. O-linked (GlcNAc) serine; alternate glycosylation is present at S7. At T20 the chain carries Phosphothreonine. The span at 21-32 shows a compositional bias: low complexity; that stretch reads GSRPSSTRSYVT. Phosphoserine occurs at positions 25 and 26. T33 is a glycosylation site (O-linked (GlcNAc) threonine). S34, S39, S42, S47, S49, and S51 each carry phosphoserine. S34 is a glycosylation site (O-linked (GlcNAc) serine; alternate). Y53 is subject to Phosphotyrosine. S55 and S56 each carry phosphoserine. Y61 is modified (phosphotyrosine). S66, S72, S73, S83, and S87 each carry phosphoserine. The segment at 96 to 131 is coil 1A; it reads FKNTRTNEKVELQELNDRFANYIDKVRFLEQQNKIL. Residues 96 to 131 adopt a coiled-coil conformation; sequence FKNTRTNEKVELQELNDRFANYIDKVRFLEQQNKIL. Positions 103–411 constitute an IF rod domain; that stretch reads EKVELQELND…KLLEGEESRI (309 aa). A Glycyl lysine isopeptide (Lys-Gly) (interchain with G-Cter in SUMO2) cross-link involves residue K104. Y117 carries the phosphotyrosine modification. Residues K120, K129, and K139 each carry the N6-acetyllysine; alternate modification. An N6-succinyllysine; alternate mark is found at K120 and K129. Residues K120, K129, and K139 each participate in a glycyl lysine isopeptide (Lys-Gly) (interchain with G-Cter in SUMO2); alternate cross-link. Positions 132 to 153 are linker 1; sequence LAELEQLKGQGKSRLGDLYEEE. The residue at position 144 (S144) is a Phosphoserine. Residues 154 to 245 adopt a coiled-coil conformation; sequence MRELRRQVDQ…KLHDEEIQEL (92 aa). Positions 154–245 are coil 1B; the sequence is MRELRRQVDQ…KLHDEEIQEL (92 aa). Residue K168 is modified to N6-acetyllysine. K188 carries the post-translational modification N6-acetyllysine; alternate. K188 carries the N6-succinyllysine; alternate modification. S214 carries the phosphoserine modification. K223 carries the post-translational modification N6-acetyllysine; alternate. K223 participates in a covalent cross-link: Glycyl lysine isopeptide (Lys-Gly) (interchain with G-Cter in SUMO2); alternate. S226 carries the post-translational modification Phosphoserine. K235 carries the N6-acetyllysine modification. The linker 12 stretch occupies residues 246 to 268; sequence QAQIQDQHVQIDMDVSKPDLTAA. K262 is covalently cross-linked (Glycyl lysine isopeptide (Lys-Gly) (interchain with G-Cter in SUMO2)). The tract at residues 269–407 is coil 2; sequence LRDVRQQYES…ATYRKLLEGE (139 aa). K294 is modified (N6-acetyllysine; alternate). K294 bears the N6-succinyllysine; alternate mark. K294 is covalently cross-linked (Glycyl lysine isopeptide (Lys-Gly) (interchain with G-Cter in SUMO2); alternate). S299 is modified (phosphoserine). The stretch at 303 to 407 forms a coiled coil; the sequence is NRNNDALRQA…ATYRKLLEGE (105 aa). K313 participates in a covalent cross-link: Glycyl lysine isopeptide (Lys-Gly) (interchain with G-Cter in SUMO2). A Phosphoserine modification is found at S325. Positions 326–329 match the [IL]-x-C-x-x-[DE] motif motif; that stretch reads LTCE. The residue at position 373 (K373) is an N6-acetyllysine; alternate. A Glycyl lysine isopeptide (Lys-Gly) (interchain with G-Cter in SUMO2); alternate cross-link involves residue K373. The interval 408–466 is tail; it reads ESRIALPLPNFSSLNLRETNLDSLPLVDTHSKRTLLIKTVETRDGQVINETSQHHDDLE. A phosphoserine mark is found at S409, S419, and S420. T426 carries the post-translational modification Phosphothreonine. Position 430 is a phosphoserine (S430). Phosphothreonine is present on T436. S438 bears the Phosphoserine mark. K439 is covalently cross-linked (Glycyl lysine isopeptide (Lys-Gly) (interchain with G-Cter in SUMO2)). At K445 the chain carries N6-acetyllysine; alternate. K445 carries the N6-succinyllysine; alternate modification. A Glycyl lysine isopeptide (Lys-Gly) (interchain with G-Cter in SUMO2); alternate cross-link involves residue K445. Residue K445 forms a Glycyl lysine isopeptide (Lys-Gly) (interchain with G-Cter in SUMO1); alternate linkage. 2 positions are modified to phosphothreonine: T446 and T458. At S459 the chain carries Phosphoserine.

Belongs to the intermediate filament family. In terms of assembly, homomer assembled from elementary dimers. Identified in complexes that contain VIM, EZR, AHNAK, BFSP1, BFSP2, ANK2, PLEC, PRX and spectrin. Interacts with BCAS3. Interacts with LGSN. Interacts with SYNM. Interacts (via rod region) with PLEC (via CH 1 domain). Interacts with STK33. Interacts with LARP6. Interacts with RAB8B. Interacts with TOR1A; the interaction associates TOR1A with the cytoskeleton. Interacts with TOR1AIP1. Interacts with TOR1AIP1. Interacts with DIAPH1. Interacts with EPPK1; interaction is dependent of higher-order structure of intermediate filament. Interacts with the non-receptor tyrosine kinase SRMS; the interaction leads to phosphorylation of VIM. Interacts with NOD2. Interacts (via head region) with CORO1C. Interacts with HDGF. Interacts with PRKCE (via phorbol-ester/DAG-type 2 domain). Interacts with BFSP2. Interacts with PPL. Interacts with PKP1 and PKP2. Interacts with SCRIB (via PDZ domains); the interaction protects SCRIB from proteasomal degradation and facilitates SCRIB localization to intermediate filaments, the interaction is reduced by cell contact inhibition. Post-translationally, filament disassembly during mitosis is promoted by phosphorylation at Ser-55 as well as by nestin. One of the most prominent phosphoproteins in various cells of mesenchymal origin. Phosphorylation is enhanced during cell division, at which time vimentin filaments are significantly reorganized. Phosphorylation by PKN1 inhibits the formation of filaments. Phosphorylated at Ser-56 by CDK5 during neutrophil secretion in the cytoplasm. Phosphorylated by STK33. Phosphorylated on tyrosine residues by SRMS. O-glycosylated during cytokinesis at sites identical or close to phosphorylation sites, this interferes with the phosphorylation status. In terms of processing, S-nitrosylation is induced by interferon-gamma and oxidatively-modified low-densitity lipoprotein (LDL(ox)) possibly implicating the iNOS-S100A8/9 transnitrosylase complex.

Its subcellular location is the cytoplasm. The protein localises to the cytoskeleton. It localises to the nucleus matrix. It is found in the cell membrane. Functionally, vimentins are class-III intermediate filaments found in various non-epithelial cells, especially mesenchymal cells. Vimentin is attached to the nucleus, endoplasmic reticulum, and mitochondria, either laterally or terminally. Plays a role in cell directional movement, orientation, cell sheet organization and Golgi complex polarization at the cell migration front. Protects SCRIB from proteasomal degradation and facilitates its localization to intermediate filaments in a cell contact-mediated manner. In terms of biological role, involved with LARP6 in the stabilization of type I collagen mRNAs for CO1A1 and CO1A2. This is Vimentin (VIM) from Canis lupus familiaris (Dog).